Consider the following 250-residue polypeptide: Proteasome subunit alpha (250 aa).

This sequence belongs to the peptidase T1A family. As to quaternary structure, the 20S proteasome core is composed of 14 alpha and 14 beta subunits that assemble into four stacked heptameric rings, resulting in a barrel-shaped structure. The two inner rings, each composed of seven catalytic beta subunits, are sandwiched by two outer rings, each composed of seven alpha subunits. The catalytic chamber with the active sites is on the inside of the barrel. Has a gated structure, the ends of the cylinder being occluded by the N-termini of the alpha-subunits. Is capped by the proteasome-associated ATPase, ARC.

The protein localises to the cytoplasm. It functions in the pathway protein degradation; proteasomal Pup-dependent pathway. With respect to regulation, the formation of the proteasomal ATPase ARC-20S proteasome complex, likely via the docking of the C-termini of ARC into the intersubunit pockets in the alpha-rings, may trigger opening of the gate for substrate entry. Interconversion between the open-gate and close-gate conformations leads to a dynamic regulation of the 20S proteasome proteolysis activity. Component of the proteasome core, a large protease complex with broad specificity involved in protein degradation. The polypeptide is Proteasome subunit alpha (Mycobacterium sp. (strain JLS)).